We begin with the raw amino-acid sequence, 507 residues long: MEWNTFFLVILIIIIKSTTPQITQRPPVENISTYHADWDTPLYTHPSNCRDDSFVPIRPAQLRCPHEFEDINKGLVSVPTRIIHLPLSVTSVSAVASGHYLHRVTYRVTCSTSFFGGQTIEKTILEAKLSRQEATDEASKDHEYPFFPEPSCIWMKNNVHKDITHYYKTPKTVSVDLYSRKFLNPDFIEGVCTTSPCQTHWQGVYWVGATPKAHCPTSETLEGHLFTRTHDHRVVKAIVAGHHPWGLTMACTVTFCGTEWIKTDLGDLIQVTGPGGTRKLTPNKCVNTDIQMRGATDDFSYLNHLITNMAQRTECLDAHSDITASGKVSSFLLSKFRPSHPGPGKAHYLLDGQIMRGDCDYEAVVSINYNRAQYKTMNNTWKSWKRVDNNTDGYDGMIFGDKLIIPDIEKYQSVYDSGMLVQRNLVEVPHLSIVFVSNTSDLSTNHIHTNLIPSDWSFNWSLWPSLSGMGVVGGAFLLLVLCCCCKASPPIPNYGIPMQQFSRSQTV.

Residues 1–20 (MEWNTFFLVILIIIIKSTTP) form the signal peptide. Topologically, residues 21–461 (QITQRPPVEN…IPSDWSFNWS (441 aa)) are virion surface. Asn-30, Asn-378, Asn-389, Asn-438, and Asn-459 each carry an N-linked (GlcNAc...) asparagine; by host glycan. Residues 462 to 482 (LWPSLSGMGVVGGAFLLLVLC) form a helical membrane-spanning segment. The Intravirion portion of the chain corresponds to 483 to 507 (CCCKASPPIPNYGIPMQQFSRSQTV).

This sequence belongs to the novirhabdovirus glycoprotein family.

It is found in the virion membrane. This protein forms spikes on the surface of the virion. It is responsible both for the binding of the virus to susceptible host cells and for inducing the uptake of the virus by the cell. The interaction between the internal components of the virion and the portion of the glycoprotein exposed on the cytoplasmic face of the plasma membrane probably directs envelopment and virus budding. The sequence is that of Spike glycoprotein (G) from Coregonus lavaretus (Common whitefish).